Here is a 533-residue protein sequence, read N- to C-terminus: MFKNRKYAIIYTFLLILRFWFSQGSSYIHPDEHLQSFQIFANKLFGWKVELPWEFTTKKPIRSVVPLNVMLLPIFLLCRCICKSNCSPYPILLFTRLYMCLISLLIDLSIWNIVPLNARWSALLLYSSSFMATTFQTHTFTNSIETIFFFLTILFLSKLNSVPLNKKISYLYTFLLAIVSVLGFFTRITFLAFVIAPYIYFSVRCFKKNVNNPKDIFLHLCIFVSVSFATVLACILEDYKFYGVFVITFWNNLKYNSQIENLSQHGLHSRLTHFFTNMPLLCGPLIFVPKLWDVRKPATWLWLLPVFILSLFPHQEPRFLLPAASIFIVNSGCLVRSYWIKFLFVMYAVVLAVFFGIMHQNGVIPAVLEVKNIIEQRNVTTMENCNLYFNPEMPTTIYFWKIYSAPTWMLARPKFSQINTSHLYNYSTKQMISKFWETYYEEVKVVNLPEENTTEFQASTLLVCPVAMLQTSSYLQNLTMLHYIPYHVDLDDTDELPLAELIMNHGIGIFTAKEICENNTITNELPTVLRSVG.

6 consecutive transmembrane segments (helical) span residues 8–28 (AIIY…SSYI), 61–81 (IRSV…CRCI), 91–111 (ILLF…LSIW), 144–164 (IETI…SVPL), 175–195 (LLAI…AFVI), and 216–236 (IFLH…ACIL). N-linked (GlcNAc...) asparagine glycosylation occurs at Asn261. 4 helical membrane-spanning segments follow: residues 274–294 (FFTN…LWDV), 297–317 (PATW…HQEP), 319–335 (FLLP…GCLV), and 338–358 (YWIK…FGIM). N-linked (GlcNAc...) asparagine glycosylation is found at Asn378, Asn419, Asn425, Asn452, Asn477, and Asn518.

Belongs to the glycosyltransferase 22 family. PIGZ subfamily.

Its subcellular location is the endoplasmic reticulum membrane. Its pathway is glycolipid biosynthesis; glycosylphosphatidylinositol-anchor biosynthesis. Functionally, alpha-1,2-mannosyltransferase involved in glycosylphosphatidylinositol-anchor biosynthesis. Transfers a fourth mannose to trimannosyl-GPIs during GPI precursor assembly. The presence of a fourth mannose in GPI is essential in fungi. This chain is GPI mannosyltransferase 4 (smp3), found in Schizosaccharomyces pombe (strain 972 / ATCC 24843) (Fission yeast).